A 152-amino-acid polypeptide reads, in one-letter code: Small ribosomal subunit protein bS6 (152 aa).

Residues 94 to 152 (VKQEGPLPTPKPSNKSSTQSENKDNPETKVESKEEQSVTNSDTSTTKKDDNEIKENTES) are disordered. Composition is skewed to basic and acidic residues over residues 114 to 129 (ENKD…KEEQ) and 138 to 152 (TTKK…NTES).

It belongs to the bacterial ribosomal protein bS6 family.

Its function is as follows. Binds together with bS18 to 16S ribosomal RNA. The protein is Small ribosomal subunit protein bS6 of Prochlorococcus marinus (strain MIT 9312).